Consider the following 558-residue polypeptide: Glucose-6-phosphate isomerase (558 aa).

Catalysis depends on E362, which acts as the Proton donor. Active-site residues include H393 and K523.

This sequence belongs to the GPI family.

The protein localises to the cytoplasm. It carries out the reaction alpha-D-glucose 6-phosphate = beta-D-fructose 6-phosphate. It functions in the pathway carbohydrate degradation; glycolysis; D-glyceraldehyde 3-phosphate and glycerone phosphate from D-glucose: step 2/4. The polypeptide is Glucose-6-phosphate isomerase (Pgi) (Drosophila yakuba (Fruit fly)).